The primary structure comprises 274 residues: Ceramide synthase (274 aa).

Residues 34-261 enclose the TLC domain; it reads ADAVIVSARL…ICRGACRLFW (228 aa). Transmembrane regions (helical) follow at residues 130 to 150, 159 to 179, 194 to 214, and 223 to 243; these read FLMV…SVVW, LGCM…KILI, ALML…LYWA, and LLAV…LLLA.

As to expression, expressed in testis. Expressed in the retina with higher expression levels in the macular than in the peripheral region.

It is found in the golgi apparatus membrane. The protein resides in the endoplasmic reticulum membrane. The catalysed reaction is sphing-4-enine + octadecanoyl-CoA = N-octadecanoylsphing-4-enine + CoA + H(+). It catalyses the reaction eicosanoyl-CoA + sphing-4-enine = N-eicosanoyl-sphing-4-enine + CoA + H(+). It carries out the reaction sphing-4-enine + hexadecanoyl-CoA = N-hexadecanoylsphing-4-enine + CoA + H(+). In terms of biological role, involved in ceramide synthesis. This is Ceramide synthase from Homo sapiens (Human).